Here is a 402-residue protein sequence, read N- to C-terminus: Calcium-responsive transactivator (402 aa).

The tract at residues 1–148 is N-terminal auto-inhibitory domain; necessary for interaction with SMARCA4/BRG1; it reads MSVAFASARP…TLPTTSMSMS (148 aa). The SH2-binding signature appears at 50 to 53; sequence YQQI. Disordered stretches follow at residues 72–129, 141–170, 195–250, 262–290, and 305–402; these read QSLL…GPNH, PTTSMSMSGSGHGSGPGYSHSGPASQSVPL, MHQQ…SSQQ, QYGHGQAASEPMSQQYYPDGHGDYAYQPA, and TQHY…NYQQ. Residues 92 to 106 are compositionally biased toward low complexity; the sequence is QSGSAQGLHSQGSLS. Over residues 117–129 the composition is skewed to polar residues; sequence SLMQAQIGNGPNH. The interval 149 to 237 is methionine-rich intra-molecular domain; sequence GSGHGSGPGY…GGGVMGQRPM (89 aa). Residues 196 to 224 show a composition bias toward low complexity; the sequence is HQQAASSHYSAAQGGSQHYQGQSMAMMGQ. An MFD domain region spans residues 251–323; sequence YLGQEEYYGG…SQYSQQQTGY (73 aa). Low complexity-rich tracts occupy residues 311–379 and 390–402; these read GGNS…RASQ and YGYEQGQYGNYQQ. The segment at 340–402 is necessary for nuclear localization; that stretch reads NQQSYPGQQQ…EQGQYGNYQQ (63 aa). An SH2-binding motif is present at residues 359 to 362; it reads SQYS. An SH3-binding motif is present at residues 377-385; sequence ASQTGPSTQ. Residues 393-402 form a necessary for interaction with CREBBP and for the recruitment of CREBBP to the nuclear bodies region; sequence EQGQYGNYQQ. The short motif at 397–400 is the SH2-binding element; it reads YGNY.

It belongs to the SS18 family. In terms of assembly, homodimer. Dimerization may be necessary for its function in neuronal dendritic development. Interacts (via C-terminus) with CREBBP (via N-terminus), EP300 and SMARCA4/BRG1. Interacts with the nBAF complex. Association with CREBBP facilitates transcription while the association with SMARCA4/BRG1 suppresses CREST-mediated transcription in resting neurons.

It is found in the nucleus. The protein resides in the chromosome. It localises to the centromere. Its subcellular location is the kinetochore. Functionally, transcriptional activator which is required for calcium-dependent dendritic growth and branching in cortical neurons. Recruits CREB-binding protein (CREBBP) to nuclear bodies. Component of the CREST-BRG1 complex, a multiprotein complex that regulates promoter activation by orchestrating a calcium-dependent release of a repressor complex and a recruitment of an activator complex. In resting neurons, transcription of the c-FOS promoter is inhibited by BRG1-dependent recruitment of a phospho-RB1-HDAC1 repressor complex. Upon calcium influx, RB1 is dephosphorylated by calcineurin, which leads to release of the repressor complex. At the same time, there is increased recruitment of CREBBP to the promoter by a CREST-dependent mechanism, which leads to transcriptional activation. The CREST-BRG1 complex also binds to the NR2B promoter, and activity-dependent induction of NR2B expression involves a release of HDAC1 and recruitment of CREBBP. The sequence is that of Calcium-responsive transactivator (SS18L1) from Bos taurus (Bovine).